Consider the following 87-residue polypeptide: UPF0250 protein YE3006 (87 aa).

It belongs to the UPF0250 family.

This is UPF0250 protein YE3006 from Yersinia enterocolitica serotype O:8 / biotype 1B (strain NCTC 13174 / 8081).